Here is a 110-residue protein sequence, read N- to C-terminus: UPF0122 protein GWCH70_1086 (110 aa).

This sequence belongs to the UPF0122 family.

Might take part in the signal recognition particle (SRP) pathway. This is inferred from the conservation of its genetic proximity to ftsY/ffh. May be a regulatory protein. This Geobacillus sp. (strain WCH70) protein is UPF0122 protein GWCH70_1086.